The sequence spans 383 residues: tRNA-specific 2-thiouridylase MnmA (383 aa).

ATP-binding positions include 29 to 36 (GMSGGVDS) and Met55. Positions 115–117 (NPD) are interaction with target base in tRNA. Residue Cys120 is the Nucleophile of the active site. Cys120 and Cys217 are disulfide-bonded. ATP is bound at residue Gly145. Residues 167–169 (KDQ) are interaction with tRNA. The active-site Cysteine persulfide intermediate is Cys217. Positions 329–330 (RY) are interaction with tRNA.

Belongs to the MnmA/TRMU family.

The protein localises to the cytoplasm. It catalyses the reaction S-sulfanyl-L-cysteinyl-[protein] + uridine(34) in tRNA + AH2 + ATP = 2-thiouridine(34) in tRNA + L-cysteinyl-[protein] + A + AMP + diphosphate + H(+). In terms of biological role, catalyzes the 2-thiolation of uridine at the wobble position (U34) of tRNA, leading to the formation of s(2)U34. This chain is tRNA-specific 2-thiouridylase MnmA, found in Histophilus somni (strain 129Pt) (Haemophilus somnus).